Consider the following 125-residue polypeptide: MTERLRIALIAHDQKKDDMVAFAKAHEQALARFDIVATGTTGSLILDACPSLSIQRVKSGPLGGDQQIGAMIAEGTVEVLIFFIDPLSPLPHDVDVKALTRLGSVYDIPMALNRATAEKLIKALD.

An MGS-like domain is found at 1 to 125 (MTERLRIALI…TAEKLIKALD (125 aa)). Substrate-binding positions include His12, Lys16, 38-41 (TGTT), and 59-60 (SG). The active-site Proton donor/acceptor is Asp65. His92 provides a ligand contact to substrate.

This sequence belongs to the methylglyoxal synthase family.

The enzyme catalyses dihydroxyacetone phosphate = methylglyoxal + phosphate. Functionally, catalyzes the formation of methylglyoxal from dihydroxyacetone phosphate. This chain is Methylglyoxal synthase, found in Brucella anthropi (strain ATCC 49188 / DSM 6882 / CCUG 24695 / JCM 21032 / LMG 3331 / NBRC 15819 / NCTC 12168 / Alc 37) (Ochrobactrum anthropi).